Reading from the N-terminus, the 330-residue chain is Diacylglycerol kinase (330 aa).

In terms of domain architecture, DAGKc spans 1 to 132 (MRKCARIIYN…VDIGKMNNRY (132 aa)). Residues 10–14 (NPTSG), threonine 41, 67–73 (GDGTLNE), and threonine 94 each bind ATP. Residues lysine 213, aspartate 216, and histidine 218 each contribute to the Mg(2+) site. Residue glutamate 273 is the Proton acceptor of the active site.

Belongs to the diacylglycerol/lipid kinase family. As to quaternary structure, homodimer. Requires Mg(2+) as cofactor.

It carries out the reaction a 1,2-diacyl-sn-glycerol + ATP = a 1,2-diacyl-sn-glycero-3-phosphate + ADP + H(+). In terms of biological role, catalyzes the phosphorylation of diacylglycerol (DAG) into phosphatidic acid. Is a key enzyme involved in the production of lipoteichoic acid by reintroducing DAG formed from the breakdown of membrane phospholipids into the phosphatidylglycerol biosynthetic pathway. This Staphylococcus haemolyticus (strain JCSC1435) protein is Diacylglycerol kinase (dagK).